The primary structure comprises 398 residues: MKVLVLNCGSSSVKYKLLEMPKGDVLAQGGVEKLGLPGSFLKLTMPNGEKVVLEKDMPEHTIAVEFILSVLKDDKYGCIKSYEEIDAVGHRLVHGGEKFSNSVEITPEVIAKVEECIPLAPLHNPANLKGVVAIEKLLPGIRQVGVFDTAFFQTMPEHVYRYALPYDMCNKHGVRRYGFHGTSHRYVSARACEILGLDYDKTRIITAHIGNGASIAAIKNGKALDVSLGMTPVEGLMMGTRSGDVDPGVLTFLMEAEGLEAAGISELINKKSGVLGVSGVSSDMREIEDAIKNGNERATLAMTMYDYRIKKYVGAYAAAMGGVDVLVFTGGVGENQYTTREKVCTDMEFMGIVFDSKVNEGMRGKEMVISKPESKVTVIVVPTDEEYMIASDTMTILK.

N7 provides a ligand contact to Mg(2+). K14 lines the ATP pocket. R91 serves as a coordination point for substrate. D148 serves as the catalytic Proton donor/acceptor. Residues 208-212, 283-285, and 331-335 contribute to the ATP site; these read HIGNG, DMR, and GVGEN. E385 is a Mg(2+) binding site.

It belongs to the acetokinase family. In terms of assembly, homodimer. Mg(2+) serves as cofactor. Mn(2+) is required as a cofactor.

The protein localises to the cytoplasm. It catalyses the reaction acetate + ATP = acetyl phosphate + ADP. It participates in metabolic intermediate biosynthesis; acetyl-CoA biosynthesis; acetyl-CoA from acetate: step 1/2. Catalyzes the formation of acetyl phosphate from acetate and ATP. Can also catalyze the reverse reaction. The protein is Acetate kinase of Porphyromonas gingivalis (strain ATCC BAA-308 / W83).